Here is a 1374-residue protein sequence, read N- to C-terminus: Sterol 3-beta-glucosyltransferase (1374 aa).

The span at 1–14 (MRPLRDDAKRRADR) shows a compositional bias: basic and acidic residues. Disordered regions lie at residues 1–60 (MRPL…RDGN), 83–190 (ARFD…PRAA), and 206–227 (TSATPYLPPNNPDKSMEDQPQS). The segment covering 16-28 (LSASMKPTSSNRP) has biased composition (polar residues). Over residues 29–41 (FSDRVPDRFKDGD) the composition is skewed to basic and acidic residues. A compositionally biased stretch (polar residues) spans 101–112 (VEQTTGKASSRT). Positions 125–138 (KRSEPSKLVLEERG) are enriched in basic and acidic residues. Residues 234 to 283 (MRLMKMFEFAKPEKVLVEYACSLLQSMLLQGYMYVTEGHICFYAYLPKKS) form the GRAM 1 domain. In terms of domain architecture, PH spans 285 to 382 (VAIKSGYLSK…WVKALQQVIF (98 aa)). The disordered stretch occupies residues 458–538 (ATKEAQDQHD…SMTDTTESAS (81 aa)). 2 stretches are compositionally biased toward basic and acidic residues: residues 461 to 473 (EAQDQHDIKHQPE) and 490 to 499 (SDQRREDSPR). Positions 503–538 (SSVGNENQGSADSFAEQGTGSSPIIQSMTDTTESAS) are enriched in polar residues. The GRAM 2 domain maps to 704-770 (DRFRAHFALP…KDIENVEKEK (67 aa)). UDP-alpha-D-glucose-binding residues include Ser-893, Arg-894, Asp-896, Ala-1196, His-1198, His-1211, Gly-1215, Thr-1216, Asp-1235, and Gln-1236. The span at 1314–1325 (ASSTPFSPTPTA) shows a compositional bias: polar residues. The disordered stretch occupies residues 1314–1338 (ASSTPFSPTPTAKASPDGGDDDLDD).

This sequence belongs to the glycosyltransferase 28 family.

It is found in the cytoplasm. The protein localises to the preautophagosomal structure membrane. The catalysed reaction is a sterol + UDP-alpha-D-glucose = a sterol 3-beta-D-glucoside + UDP + H(+). It catalyses the reaction ergosterol + UDP-alpha-D-glucose = ergosteryl 3-beta-D-glucoside + UDP + H(+). Sterol glycosyltransferase responsible for the glycosylation of ergosterol to form ergosterol-glucoside. The chain is Sterol 3-beta-glucosyltransferase from Penicillium rubens (strain ATCC 28089 / DSM 1075 / NRRL 1951 / Wisconsin 54-1255) (Penicillium chrysogenum).